Reading from the N-terminus, the 550-residue chain is MTMAACYANYDMSSLSHGMSALSALQQQQQQQQQQHSQTQQQHHHQQQQQHMYHAAVAAHQQQLLQQQQQQQHHRHHHQPANTSSSSNSRHSHAAATQTQVAAAVANSRQQQQQQQQQQQQQQQQQTASSNSNAAPAPSPQKDYSIPLHVDCSVEYELPNQPKPPAGQRVEPLLMIHPCYFRKMESQRRSPFVNNMHATARAVSSSSLSSGAALGGGGSGAAVATAPSSSAARRGARAATSAQQQQQQQQRYQQQQQQLRQQHQQMSQMSQQAHYPQQQSSLVRQHQQQQQQQQQQQRASSNQSQRQSQSQSQSQSHAANSAAAAAAQASIAAAAAGQWDQLAALAARTALTPHHMLHPHSHYAAKGSGGGAGGGKRDAMISGSYGQTAVASGKLQQSQVQQQQPQQQQQHCLPPPPWDATSMLMDRSPMATVPSNYQAGPDTNPMRLYSATPTAGAASGGSASVGGGGAVSGAGATGAVNTATDKLSGKYRQYLRSQRMHPYAAAASLNLAAAAAAAGQTSFVPFSSAATAVAATPTFQHLPQISCYNV.

Coiled coils occupy residues 20–44, 105–126, and 239–274; these read SALS…QQHH, VANS…QQQQ, and ATSA…QQAH. Disordered regions lie at residues 21-145, 208-320, 361-380, and 392-465; these read ALSA…KDYS, LSSG…HAAN, SHYA…RDAM, and SGKL…SASV. Low complexity-rich tracts occupy residues 24-71, 81-136, and 221-320; these read ALQQ…QQQQ, ANTS…NAAP, and AAVA…HAAN. Composition is skewed to low complexity over residues 396–412 and 450–462; these read QQSQ…QQHC and SATP…SGGS.

Homodimer. Interacts with esc, Trl, E(z), scm and ph-p in vitro. Found in vivo in an esc-containing complex, which may be the Esc/E(z) complex. Also found in vivo in a Pc-containing complex that may be the PRC1 complex, but does not interact with Pc directly. Interacts with cyclin CycG.

The protein localises to the nucleus. It localises to the cytoplasm. The protein resides in the cytoskeleton. It is found in the microtubule organizing center. Its subcellular location is the centrosome. The protein localises to the chromosome. Its function is as follows. Essential protein required for proper condensation of mitotic chromosomes and progression through mitosis. Binds to specific polytene chromosome sites, many of which are shared with the posterior sex combs (Psc) protein. Involved in maintaining Abd-B repression outside its normal expression domain. The chain is Centrosomal and chromosomal factor (corto) from Drosophila melanogaster (Fruit fly).